The following is a 132-amino-acid chain: Small ribosomal subunit protein uS8 (132 aa).

It belongs to the universal ribosomal protein uS8 family. In terms of assembly, part of the 30S ribosomal subunit. Contacts proteins S5 and S12.

One of the primary rRNA binding proteins, it binds directly to 16S rRNA central domain where it helps coordinate assembly of the platform of the 30S subunit. The chain is Small ribosomal subunit protein uS8 from Methylocella silvestris (strain DSM 15510 / CIP 108128 / LMG 27833 / NCIMB 13906 / BL2).